The chain runs to 202 residues: Imidazoleglycerol-phosphate dehydratase (202 aa).

The protein belongs to the imidazoleglycerol-phosphate dehydratase family.

It localises to the cytoplasm. The enzyme catalyses D-erythro-1-(imidazol-4-yl)glycerol 3-phosphate = 3-(imidazol-4-yl)-2-oxopropyl phosphate + H2O. It functions in the pathway amino-acid biosynthesis; L-histidine biosynthesis; L-histidine from 5-phospho-alpha-D-ribose 1-diphosphate: step 6/9. The chain is Imidazoleglycerol-phosphate dehydratase from Rhizobium leguminosarum bv. trifolii (strain WSM2304).